The sequence spans 255 residues: Electron transfer flavoprotein subunit beta (255 aa).

Residue Ala-2 is modified to N-acetylalanine. AMP is bound by residues Ala-9, 39 to 42, Cys-66, and 123 to 134; these read NPFC and GKQAIDDDCNQT. The segment at 183-205 is recognition loop; sequence ADLRLNEPRYATLPNIMKAKKKK. Lys-200 carries the post-translational modification N6,N6,N6-trimethyllysine; by ETFBKMT; alternate. The residue at position 200 (Lys-200) is an N6-acetyllysine; alternate. Lys-200 carries the post-translational modification N6-methyllysine; alternate. An N6,N6,N6-trimethyllysine; by ETFBKMT modification is found at Lys-203. Position 210 is an N6-acetyllysine; alternate (Lys-210). The residue at position 210 (Lys-210) is an N6-succinyllysine; alternate. Phosphoserine is present on residues Ser-223 and Ser-226. Lys-238 carries the N6-acetyllysine modification. Lys-248 carries the N6-acetyllysine; alternate modification. Lys-248 carries the N6-succinyllysine; alternate modification.

It belongs to the ETF beta-subunit/FixA family. Heterodimer composed of ETFA and ETFB. Identified in a complex that contains ETFA, ETFB and ETFRF1. Interacts with ACADM. Post-translationally, methylated. Trimethylation at Lys-200 and Lys-203 may negatively regulate the activity in electron transfer from acyl-CoA dehydrogenases.

It is found in the mitochondrion matrix. Its function is as follows. Heterodimeric electron transfer flavoprotein that accepts electrons from several mitochondrial dehydrogenases, including acyl-CoA dehydrogenases, glutaryl-CoA and sarcosine dehydrogenase. It transfers the electrons to the main mitochondrial respiratory chain via ETF-ubiquinone oxidoreductase. Required for normal mitochondrial fatty acid oxidation and normal amino acid metabolism. ETFB binds an AMP molecule that probably has a purely structural role. The polypeptide is Electron transfer flavoprotein subunit beta (Bos taurus (Bovine)).